The primary structure comprises 144 residues: Large ribosomal subunit protein uL15 (144 aa).

Residues 1–52 are disordered; sequence MRLNTLSPAEGAKHAPKRVGRGIGSGLGKTAGRGHKGQNSRSGGGVRRGFEG. The segment covering 21-31 has biased composition (gly residues); sequence RGIGSGLGKTA.

This sequence belongs to the universal ribosomal protein uL15 family. In terms of assembly, part of the 50S ribosomal subunit.

Its function is as follows. Binds to the 23S rRNA. The sequence is that of Large ribosomal subunit protein uL15 from Yersinia pseudotuberculosis serotype O:1b (strain IP 31758).